A 207-amino-acid chain; its full sequence is Glycerol-3-phosphate acyltransferase (207 aa).

5 helical membrane passes run 4 to 24, 58 to 78, 86 to 106, 120 to 140, and 162 to 182; these read VVAT…SFAV, ILTL…AQWL, ETGI…PVFH, ILLA…LIIA, and VLMN…VLLI.

Belongs to the PlsY family. Probably interacts with PlsX.

It is found in the cell inner membrane. It catalyses the reaction an acyl phosphate + sn-glycerol 3-phosphate = a 1-acyl-sn-glycero-3-phosphate + phosphate. Its pathway is lipid metabolism; phospholipid metabolism. Catalyzes the transfer of an acyl group from acyl-phosphate (acyl-PO(4)) to glycerol-3-phosphate (G3P) to form lysophosphatidic acid (LPA). This enzyme utilizes acyl-phosphate as fatty acyl donor, but not acyl-CoA or acyl-ACP. This is Glycerol-3-phosphate acyltransferase from Ralstonia pickettii (strain 12J).